Consider the following 227-residue polypeptide: 2,3-bisphosphoglycerate-dependent phosphoglycerate mutase (227 aa).

Residues 7–14, 20–21, Arg59, 86–89, Lys97, 113–114, and 182–183 contribute to the substrate site; these read RHGLSEWN, TG, ERHY, RR, and GN. His8 (tele-phosphohistidine intermediate) is an active-site residue. Residue Glu86 is the Proton donor/acceptor of the active site.

This sequence belongs to the phosphoglycerate mutase family. BPG-dependent PGAM subfamily. As to quaternary structure, homodimer.

The catalysed reaction is (2R)-2-phosphoglycerate = (2R)-3-phosphoglycerate. It participates in carbohydrate degradation; glycolysis; pyruvate from D-glyceraldehyde 3-phosphate: step 3/5. In terms of biological role, catalyzes the interconversion of 2-phosphoglycerate and 3-phosphoglycerate. The chain is 2,3-bisphosphoglycerate-dependent phosphoglycerate mutase from Mannheimia succiniciproducens (strain KCTC 0769BP / MBEL55E).